Reading from the N-terminus, the 527-residue chain is Anthranilate synthase component 1 1 (527 aa).

Ser-52 lines the L-tryptophan pocket. Residues Ala-53–Glu-72 are disordered. Pro-298–Met-300 serves as a coordination point for L-tryptophan. Gly-333–Thr-334 provides a ligand contact to chorismate. Glu-360 contacts Mg(2+). Chorismate is bound by residues Tyr-448, Arg-468, Gly-486–Gly-488, and Gly-488. Residue Glu-501 coordinates Mg(2+).

The protein belongs to the anthranilate synthase component I family. Tetramer of two components I and two components II. Requires Mg(2+) as cofactor.

The catalysed reaction is chorismate + L-glutamine = anthranilate + pyruvate + L-glutamate + H(+). Its pathway is amino-acid biosynthesis; L-tryptophan biosynthesis; L-tryptophan from chorismate: step 1/5. The polypeptide is Anthranilate synthase component 1 1 (trpE1) (Halobacterium salinarum (strain ATCC 700922 / JCM 11081 / NRC-1) (Halobacterium halobium)).